Reading from the N-terminus, the 373-residue chain is UDP-sugar transporter UST74c (373 aa).

The tract at residues L27–L49 is disordered. S50 carries the phosphoserine modification. 8 helical membrane-spanning segments follow: residues H89–G111, F131–L153, I174–L196, M206–Y225, Y238–G260, V275–C297, S302–I324, and V329–V351.

It belongs to the TPT transporter family. SLC35D subfamily.

It is found in the golgi apparatus membrane. Involved in the import of UDP-sugars from the cytoplasm into the Golgi lumen. The protein is UDP-sugar transporter UST74c (frc) of Drosophila melanogaster (Fruit fly).